The sequence spans 574 residues: Urease subunit alpha (574 aa).

Positions 131-574 (GAIDSHIHFI…LPMAQRYLLL (444 aa)) constitute a Urease domain. Residues histidine 136, histidine 138, and lysine 219 each contribute to the Ni(2+) site. N6-carboxylysine is present on lysine 219. Substrate is bound at residue histidine 221. 2 residues coordinate Ni(2+): histidine 248 and histidine 274. Catalysis depends on histidine 322, which acts as the Proton donor. Aspartate 362 lines the Ni(2+) pocket. The tract at residues 384–403 (KVQRGPLPEDAANPRGSRND) is disordered.

It belongs to the metallo-dependent hydrolases superfamily. Urease alpha subunit family. As to quaternary structure, heterotrimer of UreA (gamma), UreB (beta) and UreC (alpha) subunits. Three heterotrimers associate to form the active enzyme. The cofactor is Ni cation. Post-translationally, carboxylation allows a single lysine to coordinate two nickel ions.

It localises to the cytoplasm. It carries out the reaction urea + 2 H2O + H(+) = hydrogencarbonate + 2 NH4(+). Its pathway is nitrogen metabolism; urea degradation; CO(2) and NH(3) from urea (urease route): step 1/1. In Prochlorococcus marinus (strain MIT 9313), this protein is Urease subunit alpha.